Reading from the N-terminus, the 273-residue chain is Undecaprenyl-diphosphatase (273 aa).

A run of 7 helical transmembrane segments spans residues 6 to 26 (SLLI…LPVS), 45 to 65 (AKTF…VMFW), 90 to 110 (LTLI…LLFH), 116 to 136 (LFNP…LIAA), 190 to 210 (YAAS…ATAL), 222 to 242 (GDIS…LIAI), and 252 to 272 (ISFI…YVVF).

This sequence belongs to the UppP family.

It localises to the cell inner membrane. It carries out the reaction di-trans,octa-cis-undecaprenyl diphosphate + H2O = di-trans,octa-cis-undecaprenyl phosphate + phosphate + H(+). Functionally, catalyzes the dephosphorylation of undecaprenyl diphosphate (UPP). Confers resistance to bacitracin. This is Undecaprenyl-diphosphatase from Shigella sonnei (strain Ss046).